The sequence spans 306 residues: Putative S-adenosyl-L-methionine-dependent methyltransferase FRAAL5401 (306 aa).

S-adenosyl-L-methionine contacts are provided by residues aspartate 126 and 155–156; that span reads DL. Residues 201-225 are disordered; the sequence is LSAPESRVATENRPNPKPGDEDRTK.

This sequence belongs to the UPF0677 family.

Its function is as follows. Exhibits S-adenosyl-L-methionine-dependent methyltransferase activity. The polypeptide is Putative S-adenosyl-L-methionine-dependent methyltransferase FRAAL5401 (Frankia alni (strain DSM 45986 / CECT 9034 / ACN14a)).